Reading from the N-terminus, the 465-residue chain is 3-isopropylmalate dehydratase large subunit (465 aa).

Cysteine 347, cysteine 407, and cysteine 410 together coordinate [4Fe-4S] cluster. Positions aspartate 416–histidine 443 are disordered.

This sequence belongs to the aconitase/IPM isomerase family. LeuC type 1 subfamily. As to quaternary structure, heterodimer of LeuC and LeuD. [4Fe-4S] cluster is required as a cofactor.

The catalysed reaction is (2R,3S)-3-isopropylmalate = (2S)-2-isopropylmalate. It participates in amino-acid biosynthesis; L-leucine biosynthesis; L-leucine from 3-methyl-2-oxobutanoate: step 2/4. Catalyzes the isomerization between 2-isopropylmalate and 3-isopropylmalate, via the formation of 2-isopropylmaleate. This is 3-isopropylmalate dehydratase large subunit from Frankia alni (strain DSM 45986 / CECT 9034 / ACN14a).